A 349-amino-acid polypeptide reads, in one-letter code: Draxin (349 aa).

An N-terminal signal peptide occupies residues methionine 1–alanine 25. 3 disordered regions span residues proline 38 to alanine 79, proline 118 to arginine 145, and aspartate 244 to proline 273. The segment covering proline 120–arginine 131 has biased composition (basic and acidic residues). Basic residues-rich tracts occupy residues threonine 132–arginine 145 and alanine 249–lysine 258. Asparagine 264 carries N-linked (GlcNAc...) asparagine glycosylation.

Belongs to the draxin family. Interacts with LRP6.

The protein localises to the secreted. Chemorepulsive axon guidance protein required for the development of spinal cord and forebrain commissures. Acts as a chemorepulsive guidance protein for commissural axons during development. Able to inhibit or repel neurite outgrowth from dorsal spinal cord. Inhibits the stabilization of cytosolic beta-catenin (CTNNB1) via its interaction with LRP6, thereby acting as an antagonist of Wnt signaling pathway. This is Draxin from Homo sapiens (Human).